The chain runs to 354 residues: S-adenosylmethionine:tRNA ribosyltransferase-isomerase (354 aa).

This sequence belongs to the QueA family. In terms of assembly, monomer.

The protein resides in the cytoplasm. The enzyme catalyses 7-aminomethyl-7-carbaguanosine(34) in tRNA + S-adenosyl-L-methionine = epoxyqueuosine(34) in tRNA + adenine + L-methionine + 2 H(+). The protein operates within tRNA modification; tRNA-queuosine biosynthesis. Transfers and isomerizes the ribose moiety from AdoMet to the 7-aminomethyl group of 7-deazaguanine (preQ1-tRNA) to give epoxyqueuosine (oQ-tRNA). In Salmonella gallinarum (strain 287/91 / NCTC 13346), this protein is S-adenosylmethionine:tRNA ribosyltransferase-isomerase.